The primary structure comprises 64 residues: Large ribosomal subunit protein uL29 (64 aa).

It belongs to the universal ribosomal protein uL29 family.

The polypeptide is Large ribosomal subunit protein uL29 (Chloroherpeton thalassium (strain ATCC 35110 / GB-78)).